The following is a 66-amino-acid chain: Conotoxin Cal6.38 (66 aa).

A signal peptide spans 1–22 (MKLTFVLIVAVLVLAVCNFTVA). Intrachain disulfides connect Cys38–Cys55, Cys45–Cys59, and Cys54–Cys64.

The protein belongs to the conotoxin O1 superfamily. Expressed by the venom duct.

The protein resides in the secreted. Its function is as follows. Probable neurotoxin. The polypeptide is Conotoxin Cal6.38 (Californiconus californicus (California cone)).